Reading from the N-terminus, the 54-residue chain is MKMLTHTCFYCSFSFFTRKFDVFGAITKKDTPVVFCPACGNQSLTVSHIEEEIG.

It belongs to the phi29likevirus gp16.6 family.

The polypeptide is Gene product 16.6 (16.6) (Bacillus phage PZA (Bacteriophage PZA)).